The sequence spans 555 residues: Branched-chain-amino-acid aminotransferase-like protein 1 (555 aa).

It belongs to the class-IV pyridoxal-phosphate-dependent aminotransferase family.

The polypeptide is Branched-chain-amino-acid aminotransferase-like protein 1 (Arabidopsis thaliana (Mouse-ear cress)).